A 503-amino-acid chain; its full sequence is GMP synthase [glutamine-hydrolyzing] (503 aa).

Residues 3–189 (PVLVVDFGSQ…AFLSSFAAPN (187 aa)) enclose the Glutamine amidotransferase type-1 domain. The Nucleophile role is filled by cysteine 80. Residues histidine 165 and glutamate 167 contribute to the active site. The 191-residue stretch at 190-380 (WDPEQTICGT…LGIPKHIVHR (191 aa)) folds into the GMPS ATP-PPase domain. 217–223 (SGGVDSV) lines the ATP pocket.

Homodimer.

It catalyses the reaction XMP + L-glutamine + ATP + H2O = GMP + L-glutamate + AMP + diphosphate + 2 H(+). It functions in the pathway purine metabolism; GMP biosynthesis; GMP from XMP (L-Gln route): step 1/1. Functionally, catalyzes the synthesis of GMP from XMP. This is GMP synthase [glutamine-hydrolyzing] from Tropheryma whipplei (strain TW08/27) (Whipple's bacillus).